The chain runs to 602 residues: Beta-(1--&gt;2)glucan export ATP-binding/permease protein NdvA (602 aa).

In terms of domain architecture, ABC transmembrane type-1 spans 21–311 (GWVLAGANLL…VVGFVNSVFM (291 aa)). 6 consecutive transmembrane segments (helical) span residues 22–42 (WVLAGANLLLAAAQFAEPVLF), 68–88 (LLLAWAVFGLFTIGCGAAVAL), 146–166 (EHFAALMSLVVLLPLSIYINW), 167–187 (RLALLLFALCVVFTVLTTLVV), 238–258 (LLAMQMPVLSWWALVTVITRA), and 285–305 (IVMFVSFATMLIQKLEQVVGF). The ABC transporter domain maps to 345 to 579 (VEFDNVSFSY…RGYFAELAHA (235 aa)). Residue 378–385 (GATGAGKS) participates in ATP binding.

The protein belongs to the ABC transporter superfamily. Beta-(1--&gt;2)glucan exporter (TC 3.A.1.108.1) family. Homodimer.

Its subcellular location is the cell inner membrane. It carries out the reaction [(1-&gt;2)-beta-D-glucosyl](n)(in) + ATP + H2O = [(1-&gt;2)-beta-D-glucosyl](n)(out) + ADP + phosphate + H(+). Its function is as follows. Involved in Beta-(1--&gt;2)glucan export. Transmembrane domains (TMD) form a pore in the inner membrane and the ATP-binding domain (NBD) is responsible for energy generation. This Rhodopseudomonas palustris (strain BisA53) protein is Beta-(1--&gt;2)glucan export ATP-binding/permease protein NdvA.